The primary structure comprises 318 residues: Putative S-adenosyl-L-methionine-dependent methyltransferase BCG_0781c (318 aa).

S-adenosyl-L-methionine-binding positions include aspartate 135 and 164–165; that span reads DL.

This sequence belongs to the UPF0677 family.

Its function is as follows. Exhibits S-adenosyl-L-methionine-dependent methyltransferase activity. This Mycobacterium bovis (strain BCG / Pasteur 1173P2) protein is Putative S-adenosyl-L-methionine-dependent methyltransferase BCG_0781c.